A 1307-amino-acid polypeptide reads, in one-letter code: Rab3 GTPase-activating protein regulatory subunit (1307 aa).

Belongs to the Rab3-GAP regulatory subunit family. In terms of assembly, the Rab3 GTPase-activating complex is a heterodimer composed of rbg-1 and rbg-2.

It localises to the cytoplasm. In terms of biological role, probable regulatory subunit of a GTPase activating protein that has specificity for Rab3 subfamily. Rab3 proteins are involved in regulated exocytosis of neurotransmitters and hormones. Rab3 GTPase-activating complex specifically converts active Rab3-GTP to the inactive form Rab3-GDP. This is Rab3 GTPase-activating protein regulatory subunit (rbg-2) from Caenorhabditis elegans.